Here is a 274-residue protein sequence, read N- to C-terminus: Formamidopyrimidine-DNA glycosylase (274 aa).

P2 acts as the Schiff-base intermediate with DNA in catalysis. Catalysis depends on E3, which acts as the Proton donor. Catalysis depends on K58, which acts as the Proton donor; for beta-elimination activity. Residues H92 and R111 each coordinate DNA. The FPG-type; degenerate zinc-finger motif lies at 239 to 273; it reads HVYGREGEPCERCGTIIEKIKVAQRGTHFCPLEQR. The Proton donor; for delta-elimination activity role is filled by R263.

It belongs to the FPG family. In terms of assembly, monomer. The cofactor is Zn(2+).

It carries out the reaction Hydrolysis of DNA containing ring-opened 7-methylguanine residues, releasing 2,6-diamino-4-hydroxy-5-(N-methyl)formamidopyrimidine.. The catalysed reaction is 2'-deoxyribonucleotide-(2'-deoxyribose 5'-phosphate)-2'-deoxyribonucleotide-DNA = a 3'-end 2'-deoxyribonucleotide-(2,3-dehydro-2,3-deoxyribose 5'-phosphate)-DNA + a 5'-end 5'-phospho-2'-deoxyribonucleoside-DNA + H(+). Functionally, involved in base excision repair of DNA damaged by oxidation or by mutagenic agents. Acts as a DNA glycosylase that recognizes and removes damaged bases. Has a preference for oxidized purines, such as 7,8-dihydro-8-oxoguanine (8-oxoG). Has AP (apurinic/apyrimidinic) lyase activity and introduces nicks in the DNA strand. Cleaves the DNA backbone by beta-delta elimination to generate a single-strand break at the site of the removed base with both 3'- and 5'-phosphates. This is Formamidopyrimidine-DNA glycosylase from Lactiplantibacillus plantarum (strain ATCC BAA-793 / NCIMB 8826 / WCFS1) (Lactobacillus plantarum).